The primary structure comprises 310 residues: Protoheme IX farnesyltransferase (310 aa).

9 consecutive transmembrane segments (helical) span residues 31 to 51 (VMSLVIFTGFVGMWLAPDSIH), 52 to 72 (PLIAGIAVICIALGAGSAGAM), 102 to 119 (ALSFGLITGFFAVFFMAL), 123 to 145 (ILASFLLLFTIFYYICIYTIWLK), 151 to 171 (NIVIGGVSGALPPVIGHAAVS), 179 to 199 (IILFLIIFIWTPPHSWAIALF), 225 to 245 (ILIYSIILFIVSLMPFFIGMN), 248 to 268 (IYLIIVCIIGLVFLYYAFSLF), and 281 to 301 (FTYSIFYLCFIFILLSSTSTI).

It belongs to the UbiA prenyltransferase family. Protoheme IX farnesyltransferase subfamily.

Its subcellular location is the cell inner membrane. It carries out the reaction heme b + (2E,6E)-farnesyl diphosphate + H2O = Fe(II)-heme o + diphosphate. It participates in porphyrin-containing compound metabolism; heme O biosynthesis; heme O from protoheme: step 1/1. Converts heme B (protoheme IX) to heme O by substitution of the vinyl group on carbon 2 of heme B porphyrin ring with a hydroxyethyl farnesyl side group. The sequence is that of Protoheme IX farnesyltransferase from Rickettsia prowazekii (strain Madrid E).